The primary structure comprises 666 residues: Endogenous retrovirus group K member 6 Gag polyprotein (666 aa).

G2 carries N-myristoyl glycine lipidation. Residues 165-264 (GKGPELVGPS…APPSRQGSKL (100 aa)) are disordered. Residues 232-247 (GMPPAPQGRAPYPQPP) show a composition bias toward pro residues. 2 consecutive CCHC-type zinc fingers follow at residues 544–561 (RKCYNCGQIGHLKKNCPV) and 580–597 (DLCPRCKKGKHWASQCRS). Residues 598–642 (KFDKNGQPLSGNEQRGQPQAPQQTGAFPIQPFVPQGFQGQQPPLS) form a disordered region. Residues 604–622 (QPLSGNEQRGQPQAPQQTG) show a composition bias toward polar residues. Positions 624 to 640 (FPIQPFVPQGFQGQQPP) are enriched in low complexity.

Belongs to the beta type-B retroviral Gag protein family. HERV class-II K(HML-2) gag subfamily. Post-translationally, myristoylation is essential for retroviral assembly. Alteration of the glycine residue leads to a block in the budding of particles and an accumulation of Gag inside the cell. In terms of processing, specific enzymatic cleavages may yield mature proteins.

Its subcellular location is the cell membrane. In terms of biological role, the products of the Gag polyproteins of infectious retroviruses perform highly complex orchestrated tasks during the assembly, budding, maturation, and infection stages of the viral replication cycle. During viral assembly, the proteins form membrane associations and self-associations that ultimately result in budding of an immature virion from the infected cell. Gag precursors also function during viral assembly to selectively bind and package two plus strands of genomic RNA. Endogenous Gag proteins may have kept, lost or modified their original function during evolution. The polypeptide is Endogenous retrovirus group K member 6 Gag polyprotein (ERVK-6) (Homo sapiens (Human)).